Reading from the N-terminus, the 273-residue chain is Gap junction beta-5 protein (273 aa).

At 1-20 (MNWSIFEGLLSGVNKYSTAF) the chain is on the cytoplasmic side. A helical membrane pass occupies residues 21–40 (GRIWLSLVFIFRVLVYLVTA). The Extracellular segment spans residues 41–75 (ERVWSDDHKDFDCNTRQPGCSNVCFDEFFPVSHVR). A helical membrane pass occupies residues 76-98 (LWALQLILVTCPSLLVVMHVAYR). At 99-126 (EVQEKRHREAHGENSGRLYLNPGKKRGG) the chain is on the cytoplasmic side. The chain crosses the membrane as a helical span at residues 127–149 (LWWTYVCSLVFKASVDIAFLYVF). Residues 150-187 (HSFYPKYILPPVVKCHADPCPNIVDCFISKPSEKNIFT) lie on the Extracellular side of the membrane. The chain crosses the membrane as a helical span at residues 188–210 (LFMVATAAICILLNLVELIYLVS). At 211 to 273 (KRCHECLAAR…PRDHVKKTIL (63 aa)) the chain is on the cytoplasmic side.

Belongs to the connexin family. Beta-type (group I) subfamily. As to quaternary structure, a connexon is composed of a hexamer of connexins.

Its subcellular location is the cell membrane. The protein resides in the cell junction. The protein localises to the gap junction. Functionally, one gap junction consists of a cluster of closely packed pairs of transmembrane channels, the connexons, through which materials of low MW diffuse from one cell to a neighboring cell. The chain is Gap junction beta-5 protein (GJB5) from Homo sapiens (Human).